Consider the following 523-residue polypeptide: MSPAGCSHVNSFKVENWKQNLRVIYQCFVWSGTPETRKRKAKSCICHMCGAHLNRLHSCLYCVFFGCFTKKHIHEHAKNKRHNLAIDLLYGGIYCFMCQDYIYDKDMEQVAKEEQRKAWKLQVFSPALVSPYQYTMTGVGEKYSTWEPTKRELELLQHNPKRRKITTNCTIGLRGLINLGNTCFMNCIVQALTHTPLLRDFFLSDRHKCEMQSPNSCLVCEMSTLFQEFYSGHRSPHIPYRLLHLVWTHARHLAGYEQQDAHEFLIAALDVLHRHCKGDDNGKKANNPNHCNCIIDQIFTGGLQSDVTCQVCHGVSTTIDPFWDISLDLPGSSTPFWPLSPGSDAGVVNGESHVSGTTTLTDCLRRFTRPEHLGSSAKIKCSGCHSYQESTKQLTMKKLPIVACFHLKRFEHSAKLRRKITTYVSFPLELDMTPFMASSKESRMNGQYQQPSDSLHNDNKYSLFAVVNHQGTLESGHYTSFIRQHKDQWFKCDDAIITKASIKDVLDSEGYLLFYHKQFLEYE.

The UBP-type zinc-finger motif lies at 4–121 (AGCSHVNSFK…KEEQRKAWKL (118 aa)). Positions 6, 8, 46, 49, 59, 62, 67, 72, 76, 82, 95, and 98 each coordinate Zn(2+). The USP domain occupies 174–518 (RGLINLGNTC…EGYLLFYHKQ (345 aa)). C183 functions as the Nucleophile in the catalytic mechanism. H477 serves as the catalytic Proton acceptor.

Belongs to the peptidase C19 family. UBP8 subfamily. As to quaternary structure, component of some SAGA transcription coactivator-HAT complexes.

It localises to the nucleus. It catalyses the reaction Thiol-dependent hydrolysis of ester, thioester, amide, peptide and isopeptide bonds formed by the C-terminal Gly of ubiquitin (a 76-residue protein attached to proteins as an intracellular targeting signal).. Histone deubiquitinating component of the transcription regulatory histone acetylation (HAT) complex SAGA. Catalyzes the deubiquitination of both histones H2A and H2B, thereby acting as a coactivator. Recruited to specific gene promoters by activators, where it is required for transcription. This Xenopus laevis (African clawed frog) protein is Ubiquitin carboxyl-terminal hydrolase 22-A (usp22-a).